A 466-amino-acid polypeptide reads, in one-letter code: A-type ATP synthase subunit B (466 aa).

This sequence belongs to the ATPase alpha/beta chains family. Has multiple subunits with at least A(3), B(3), C, D, E, F, H, I and proteolipid K(x).

Its subcellular location is the cell membrane. Functionally, component of the A-type ATP synthase that produces ATP from ADP in the presence of a proton gradient across the membrane. The B chain is a regulatory subunit. This is A-type ATP synthase subunit B from Metallosphaera sedula (strain ATCC 51363 / DSM 5348 / JCM 9185 / NBRC 15509 / TH2).